Reading from the N-terminus, the 348-residue chain is Phosphate acyltransferase (348 aa).

The protein belongs to the PlsX family. As to quaternary structure, homodimer. Probably interacts with PlsY.

Its subcellular location is the cytoplasm. It catalyses the reaction a fatty acyl-[ACP] + phosphate = an acyl phosphate + holo-[ACP]. It functions in the pathway lipid metabolism; phospholipid metabolism. Catalyzes the reversible formation of acyl-phosphate (acyl-PO(4)) from acyl-[acyl-carrier-protein] (acyl-ACP). This enzyme utilizes acyl-ACP as fatty acyl donor, but not acyl-CoA. This Pectobacterium atrosepticum (strain SCRI 1043 / ATCC BAA-672) (Erwinia carotovora subsp. atroseptica) protein is Phosphate acyltransferase.